The following is a 196-amino-acid chain: MTELAPKQITYCGVCTWPLEFCEFGISLPRCQSWLASKHPELFSTVYPNTPNPESVSASAPSADELASKLELATLSSDPKEAKIQAELLKKQAKHQLKQEKELTKKQNSKIIIKRIERNKRKHIISISGLEVFQIEPKKLAKTFASKFATGASVVKNAEKLDEVVVQGDVSDEAKEYIEKLLKEQEGLENVKVEPS.

An SUI1 domain is found at 111 to 182; it reads IIIKRIERNK…EAKEYIEKLL (72 aa).

This sequence belongs to the DENR family. Interacts with the 40S ribosomal subunit.

It localises to the cytoplasm. This Lodderomyces elongisporus (strain ATCC 11503 / CBS 2605 / JCM 1781 / NBRC 1676 / NRRL YB-4239) (Yeast) protein is Translation machinery-associated protein 22 (TMA22).